The following is a 1124-amino-acid chain: Regulator of nonsense transcripts 1 (1124 aa).

Residues 1 to 410 form a sufficient for interaction with RENT2 region; the sequence is MSVEAYGPSS…LRSSVGAPVE (410 aa). Residues S10 and S31 each carry the phosphoserine modification. The tract at residues 39-69 is disordered; it reads TLPSQTQTPPGGPGGAGGPGGAGAGGAAGQL. Over residues 51-66 the composition is skewed to gly residues; it reads PGGAGGPGGAGAGGAA. The Upf1 CH-rich domain maps to 110–267; it reads TKDLPVHACS…NKLEELWKEN (158 aa). Positions 118, 121, 132, 135, 140, 150, 154, 160, 178, 181, 204, and 208 each coordinate Zn(2+). The C3H stretch occupies residues 118–150; sequence CSYCGIHDPACVVYCNTSKKWFCNGRGNTSGSH. Positions 132–160 are CC/SHH/C; that stretch reads CNTSKKWFCNGRGNTSGSHIVNHLVRAKC. Residues 178-208 are C4; that stretch reads CYNCGCRNVFLLGFIPAKADSVVVLLCRQPC. Residues Q481 and 501-505 each bind ATP; that span reads GTGKT. Residue S560 is modified to Phosphoserine. The ATP site is built by Q671, Y708, and E839. S951 carries the phosphoserine modification. 2 disordered regions span residues 1004-1053 and 1066-1091; these read FGQA…VASQ and SMSQ…YLGD. R1014 is subject to Omega-N-methylarginine. Positions 1020-1029 are enriched in basic residues; sequence KTGRGGRQKN. Polar residues predominate over residues 1036–1053; the sequence is PSQTTLPNSQASQDVASQ. The span at 1066 to 1081 shows a compositional bias: low complexity; the sequence is SMSQPSQMSQPGLSQP. Phosphoserine is present on residues S1084, S1102, S1105, and S1122. 2 consecutive short sequence motifs ([ST]-Q motif) follow at residues 1084–1085 and 1102–1103; these read SQ. Residues 1105–1124 are disordered; sequence STYQGERAYQHGGVTGLSQY.

The protein belongs to the DNA2/NAM7 helicase family. Found in a post-splicing messenger ribonucleoprotein (mRNP) complex. Associates with the exon junction complex (EJC). Associates with the SGM1C complex; is phosphorylated by the complex kinase component SGM1. Part of a complex composed of SMG1, DHX34 and UPF1; within the complex DHX34 acts as a scaffolding protein to facilitate SMG1 phosphorylation of UPF1. Interacts with UPF2. Interacts with UPF3A and UPF3B. Interacts with EST1A. Interacts with SLBP. Interacts (when hyperphosphorylated) with PNRC2. Interacts with AGO1 and AGO2. Interacts with GSPT2. Interacts with isoform 1 and isoform 5 of ADAR/ADAR1. Interacts with SMG7. Interacts with ZC3H12A; this interaction occurs in a mRNA translationally active- and termination-dependent manner and is essential for ZC3H12A-mediated degradation of target mRNAs. Interacts with CPSF6. Interacts with MOV10; the interaction is direct and RNA-dependent. Interacts with SHFL; the interaction increases in the presence of RNA. Interacts with UPF2 and DDX4; interactions are mediated by TDRD6. Interacts with DHX34 and PABPC1/PABP1; the interactions are RNA-independent. Interacts with RBM46. In terms of processing, phosphorylated by SMG1; required for formation of mRNA surveillance complexes. Localizes in male germ cells.

The protein localises to the cytoplasm. The protein resides in the P-body. It localises to the nucleus. It is found in the perinuclear region. It catalyses the reaction ATP + H2O = ADP + phosphate + H(+). RNA-dependent helicase required for nonsense-mediated decay (NMD) of aberrant mRNAs containing premature stop codons and modulates the expression level of normal mRNAs. Is recruited to mRNAs upon translation termination and undergoes a cycle of phosphorylation and dephosphorylation; its phosphorylation appears to be a key step in NMD. Recruited by release factors to stalled ribosomes together with the SMG1C protein kinase complex to form the transient SURF (SMG1-UPF1-eRF1-eRF3) complex. In EJC-dependent NMD, the SURF complex associates with the exon junction complex (EJC) (located 50-55 or more nucleotides downstream from the termination codon) through UPF2 and allows the formation of an UPF1-UPF2-UPF3 surveillance complex which is believed to activate NMD. Phosphorylated UPF1 is recognized by EST1B/SMG5, SMG6 and SMG7 which are thought to provide a link to the mRNA degradation machinery involving exonucleolytic and endonucleolytic pathways, and to serve as adapters to protein phosphatase 2A (PP2A), thereby triggering UPF1 dephosphorylation and allowing the recycling of NMD factors. UPF1 can also activate NMD without UPF2 or UPF3, and in the absence of the NMD-enhancing downstream EJC indicative for alternative NMD pathways. Plays a role in replication-dependent histone mRNA degradation at the end of phase S; the function is independent of UPF2. For the recognition of premature termination codons (PTC) and initiation of NMD a competitive interaction between UPF1 and PABPC1 with the ribosome-bound release factors is proposed. The ATPase activity of UPF1 is required for disassembly of mRNPs undergoing NMD. Together with UPF2 and dependent on TDRD6, mediates the degradation of mRNA harboring long 3'UTR by inducing the NMD machinery. Also capable of unwinding double-stranded DNA and translocating on single-stranded DNA. The sequence is that of Regulator of nonsense transcripts 1 from Mus musculus (Mouse).